An 892-amino-acid polypeptide reads, in one-letter code: Phenylalanine--tRNA ligase beta subunit (892 aa).

The region spanning 39 to 150 (NPGVEGVVVG…PGLEPGMDVA (112 aa)) is the tRNA-binding domain. The 164-residue stretch at 406–569 (AVPPVILLRT…RCEGYDAIPL (164 aa)) folds into the B5 domain. Residues 442 to 518 (VLTPADLAAD…ALLGGGESDG (77 aa)) form an insert region. Positions 547, 553, 556, and 557 each coordinate Mg(2+). Residues 799-891 (PRFPAVTRDV…ALKALGAELR (93 aa)) form the FDX-ACB domain.

This sequence belongs to the phenylalanyl-tRNA synthetase beta subunit family. Type 1 subfamily. As to quaternary structure, tetramer of two alpha and two beta subunits. Mg(2+) is required as a cofactor.

The protein resides in the cytoplasm. It carries out the reaction tRNA(Phe) + L-phenylalanine + ATP = L-phenylalanyl-tRNA(Phe) + AMP + diphosphate + H(+). The protein is Phenylalanine--tRNA ligase beta subunit of Symbiobacterium thermophilum (strain DSM 24528 / JCM 14929 / IAM 14863 / T).